The following is a 104-amino-acid chain: Large ribosomal subunit protein eL30 (104 aa).

It belongs to the eukaryotic ribosomal protein eL30 family.

This Sulfolobus acidocaldarius (strain ATCC 33909 / DSM 639 / JCM 8929 / NBRC 15157 / NCIMB 11770) protein is Large ribosomal subunit protein eL30 (rpl30e).